Reading from the N-terminus, the 274-residue chain is MNKTAIALLALLASSASLAATPWQKITQPVPGSAQSIGSFSNGCIVGADTLPIQSEHYQVMRTDQRRYFGHPDLVMFIQRLSSQVSNLSLGTVLIGDMGMPAGGRFNGGHASHQTGLDVDIFLQLPKTRWTSAQLLRPQALDLVSRDGKHVVPTLWKPEIFSLIKLAAQDKDVTRIFVNPAIKQQLCLDAGTDRDWLRKVRPWFQHRAHMHVRLRCPADSLECEDQPLPPPGDGCGAELQSWFEPPKPGTTKPEKKTPPPLPPSCQALLDEHVI.

The first 19 residues, 1–19, serve as a signal peptide directing secretion; the sequence is MNKTAIALLALLASSASLA. 3 disulfides stabilise this stretch: Cys44-Cys265, Cys187-Cys235, and Cys216-Cys223. His110, His113, Asp120, Asp147, His150, and His211 together coordinate Zn(2+). The segment at 227–274 is disordered; sequence PLPPPGDGCGAELQSWFEPPKPGTTKPEKKTPPPLPPSCQALLDEHVI.

It belongs to the peptidase M74 family. As to quaternary structure, dimer. Zn(2+) serves as cofactor.

Its subcellular location is the periplasm. Its function is as follows. Murein endopeptidase that cleaves the D-alanyl-meso-2,6-diamino-pimelyl amide bond that connects peptidoglycan strands. Likely plays a role in the removal of murein from the sacculus. This is Penicillin-insensitive murein endopeptidase from Escherichia coli O17:K52:H18 (strain UMN026 / ExPEC).